The chain runs to 353 residues: Rhodopsin (353 aa).

At 1-36 (MNGTEGPYFYIPMVNTTGIVRSPYEYPQYYLVNPAA) the chain is on the extracellular side. N2 and N15 each carry an N-linked (GlcNAc...) asparagine glycan. The helical transmembrane segment at 37–61 (YAALGAYMFLLILLGFPINFLTLYV) threads the bilayer. At 62–73 (TIEHKKLRTPLN) the chain is on the cytoplasmic side. The helical transmembrane segment at 74–96 (YILLNLAVANLFMVFGGFTTTMY) threads the bilayer. Residues 97–110 (TSMHGYFVLGRLGC) are Extracellular-facing. Cysteines 110 and 187 form a disulfide. A helical transmembrane segment spans residues 111–133 (NLEGFFATLGGEIALWSLVVLAV). The 'Ionic lock' involved in activated form stabilization signature appears at 134-136 (ERW). Over 134 to 152 (ERWMVVCKPISNFRFGENH) the chain is Cytoplasmic. The helical transmembrane segment at 153-173 (AIMGLAFTWVMASACAVPPLV) threads the bilayer. The Extracellular portion of the chain corresponds to 174-202 (GWSRYIPEGMQCSCGIDYYTRAEGFNNES). N-linked (GlcNAc...) asparagine glycosylation is present at N200. Residues 203-224 (FVIYMFVCHFLIPLVVVFFCYG) traverse the membrane as a helical segment. At 225 to 252 (RLLCAVKEAAAAQQESETTQRAEREVSR) the chain is on the cytoplasmic side. The chain crosses the membrane as a helical span at residues 253–274 (MVVIMVVAFLICWCPYAGVAWY). Residues 275–286 (IFTHQGSEFGPL) are Extracellular-facing. The helical transmembrane segment at 287-308 (FMTFPAFFAKSSSIYNPMIYIC) threads the bilayer. K296 carries the N6-(retinylidene)lysine modification. Residues 309-353 (MNKQFRHCMITTLCCGKNPFEEEEGASTTSKTEASSVSSSSVSPA) are Cytoplasmic-facing. 2 S-palmitoyl cysteine lipidation sites follow: C322 and C323. The disordered stretch occupies residues 330-353 (EEEGASTTSKTEASSVSSSSVSPA). Residues 334–353 (ASTTSKTEASSVSSSSVSPA) are compositionally biased toward low complexity.

The protein belongs to the G-protein coupled receptor 1 family. Opsin subfamily. Phosphorylated on some or all of the serine and threonine residues present in the C-terminal region. Post-translationally, contains one covalently linked retinal chromophore.

The protein localises to the membrane. The protein resides in the cell projection. It localises to the cilium. Its subcellular location is the photoreceptor outer segment. In terms of biological role, photoreceptor required for image-forming vision at low light intensity. While most salt water fish species use retinal as chromophore, most freshwater fish use 3-dehydroretinal, or a mixture of retinal and 3-dehydroretinal. Light-induced isomerization of 11-cis to all-trans retinal triggers a conformational change that activates signaling via G-proteins. Subsequent receptor phosphorylation mediates displacement of the bound G-protein alpha subunit by arrestin and terminates signaling. This is Rhodopsin (rho) from Mugil cephalus (Flathead mullet).